The sequence spans 208 residues: Heavy metal-associated isoprenylated plant protein 42 (208 aa).

The region spanning 6 to 70 is the HMA domain; that stretch reads FPICILKMNL…AVAKLGQSPQ (65 aa). Positions 93-116 are disordered; it reads ATNKTQDKPSPPAPPVTATTPVET. Cys-205 is modified (cysteine methyl ester). Residue Cys-205 is the site of S-farnesyl cysteine attachment. Positions 206-208 are cleaved as a propeptide — removed in mature form; that stretch reads SIM.

It belongs to the HIPP family.

Functionally, probable heavy-metal-binding protein. The sequence is that of Heavy metal-associated isoprenylated plant protein 42 from Arabidopsis thaliana (Mouse-ear cress).